The primary structure comprises 224 residues: Adenylate kinase (224 aa).

10-15 is a binding site for ATP; the sequence is GSGKST. The NMP stretch occupies residues 30 to 59; it reads SSGDLIRGEIERKSSLGLEMAAYLSRGDLI. AMP is bound by residues serine 31, arginine 36, 57–59, 83–86, and glutamine 90; these read DLI and GYPR. Residues 124–161 are LID; that stretch reads GRRICPNCGAVYHITYNPPKVPGICDVCGTKLIQRTDD. ATP is bound at residue arginine 125. Cysteine 128 and cysteine 131 together coordinate Zn(2+). An ATP-binding site is contributed by 134–135; it reads VY. The Zn(2+) site is built by cysteine 148 and cysteine 151. Positions 158 and 169 each coordinate AMP. Glycine 197 is an ATP binding site.

This sequence belongs to the adenylate kinase family. As to quaternary structure, monomer.

The protein localises to the cytoplasm. The enzyme catalyses AMP + ATP = 2 ADP. It functions in the pathway purine metabolism; AMP biosynthesis via salvage pathway; AMP from ADP: step 1/1. Catalyzes the reversible transfer of the terminal phosphate group between ATP and AMP. Plays an important role in cellular energy homeostasis and in adenine nucleotide metabolism. This is Adenylate kinase from Thermococcus gammatolerans (strain DSM 15229 / JCM 11827 / EJ3).